The sequence spans 44 residues: Protein PsbN (44 aa).

Residues 6-26 (FFFTIFLWFFLLSITAYSIYV) form a helical membrane-spanning segment.

The protein belongs to the PsbN family.

It is found in the plastid. The protein resides in the chloroplast thylakoid membrane. May play a role in photosystem I and II biogenesis. The sequence is that of Protein PsbN from Stigeoclonium helveticum (Green alga).